The chain runs to 637 residues: tRNA uridine 5-carboxymethylaminomethyl modification enzyme MnmG (637 aa).

14–19 lines the FAD pocket; the sequence is GAGHAG. Residue 279-293 coordinates NAD(+); that stretch reads GPRYCPSIEDKVVRF.

The protein belongs to the MnmG family. Homodimer. Heterotetramer of two MnmE and two MnmG subunits. FAD serves as cofactor.

Its subcellular location is the cytoplasm. Functionally, NAD-binding protein involved in the addition of a carboxymethylaminomethyl (cmnm) group at the wobble position (U34) of certain tRNAs, forming tRNA-cmnm(5)s(2)U34. This chain is tRNA uridine 5-carboxymethylaminomethyl modification enzyme MnmG, found in Desulfitobacterium hafniense (strain Y51).